Reading from the N-terminus, the 188-residue chain is dCTP deaminase (188 aa).

109–114 (KSTYAR) serves as a coordination point for dCTP. Residue Glu-135 is the Proton donor/acceptor of the active site. DCTP is bound by residues Gln-154, Tyr-168, and Gln-178.

Belongs to the dCTP deaminase family. In terms of assembly, homotrimer.

The enzyme catalyses dCTP + H2O + H(+) = dUTP + NH4(+). Its pathway is pyrimidine metabolism; dUMP biosynthesis; dUMP from dCTP (dUTP route): step 1/2. Its function is as follows. Catalyzes the deamination of dCTP to dUTP. The protein is dCTP deaminase of Helicobacter acinonychis (strain Sheeba).